The chain runs to 295 residues: Alpha-soluble NSF attachment protein (295 aa).

Position 1 is an N-acetylmethionine (methionine 1). A phosphoserine mark is found at serine 26, serine 29, and serine 195.

Belongs to the SNAP family. In terms of assembly, interacts with PRKCABP, and disrupts the interaction between GRIA2 and PRKCABP, leading to the internalization of GRIA2. Found in a complex with VAMP8. Component of a SNARE-like complex that contains at least ZW10, USE1L, RINT1, STX18 and NAPA/SNAP-alpha. Interacts with VTI1A. Interacts with STX12. Interacts with GNA12 (via N-terminus); the interaction promotes CDH5 localization to plasma membrane.

The protein localises to the cell membrane. In terms of biological role, required for vesicular transport between the endoplasmic reticulum and the Golgi apparatus. Together with GNA12 promotes CDH5 localization to plasma membrane. The sequence is that of Alpha-soluble NSF attachment protein (Napa) from Mus musculus (Mouse).